Reading from the N-terminus, the 266-residue chain is Orotidine 5'-phosphate decarboxylase (266 aa).

Substrate contacts are provided by residues Asp-38, 60–62 (KTH), 92–101 (DRKFADIGNT), Tyr-218, and Arg-236. Catalysis depends on Lys-94, which acts as the Proton donor.

The protein belongs to the OMP decarboxylase family.

The catalysed reaction is orotidine 5'-phosphate + H(+) = UMP + CO2. The protein operates within pyrimidine metabolism; UMP biosynthesis via de novo pathway; UMP from orotate: step 2/2. The polypeptide is Orotidine 5'-phosphate decarboxylase (URA3) (Candida maltosa (Yeast)).